We begin with the raw amino-acid sequence, 60 residues long: Large ribosomal subunit protein uL30 (60 aa).

The protein belongs to the universal ribosomal protein uL30 family. Part of the 50S ribosomal subunit.

The chain is Large ribosomal subunit protein uL30 from Streptococcus suis (strain 98HAH33).